Here is a 313-residue protein sequence, read N- to C-terminus: Pyrimidine-specific ribonucleoside hydrolase RihB (313 aa).

The active-site Proton acceptor is the Asp11. 3 residues coordinate Ca(2+): Asp11, Asp16, and Val124. Substrate-binding residues include Gln227 and His239. A Ca(2+)-binding site is contributed by Asp240.

The protein belongs to the IUNH family. RihB subfamily. In terms of assembly, homotetramer. Requires Ca(2+) as cofactor.

It carries out the reaction a pyrimidine ribonucleoside + H2O = a pyrimidine nucleobase + D-ribose. Its function is as follows. Hydrolyzes cytidine or uridine to ribose and cytosine or uracil, respectively. Has a clear preference for cytidine over uridine. Strictly specific for ribonucleosides. This Escherichia coli O157:H7 protein is Pyrimidine-specific ribonucleoside hydrolase RihB.